The sequence spans 490 residues: MATENPTRVATATPEATGADVVTRFAPSPTGYLHIGGARTALFNWLFARHHGGKFLLRIEDTDRARSTDAAIDAILDGMRWLELDWDGETVFQFARAPRHAEVAHDLLARGGAYRCYLTQDELAAMRAEAQEKRQPFRVRSPWRDRDDGDPAAPHVLRLRAPQDGAVTIADKVQGEVTVQNAELDDFILLRSDGTPTYMLSVVVDDNDMGVTHVIRGDDHLNNAFRQLALIRAMDWREPVYAHVPLIHGADGTKLSKRHGALGVDAYRDAMGYLPEAVNNYLLRLGWGHGDDEIISRAQAIEWFDLDHVGRSPSRFDFKKLENLNGHYLREADDARLAGLVAPRIEALVGRALDNADRDLLTQAMAALKPRAKTLGEIAEGATFLFAPDPMPVDEKAAEVLASAPEGLLAAMTQRLRGLDDDHWTSEDLEAAVRAEAEAAELGLGKLAQPLRAALTGRTVSPGIFDVLLLLGRKVSLARLDAAQHYPAGA.

Residues 27 to 37 carry the 'HIGH' region motif; that stretch reads PSPTGYLHIGG. The short motif at 254–258 is the 'KMSKS' region element; it reads KLSKR. K257 provides a ligand contact to ATP.

It belongs to the class-I aminoacyl-tRNA synthetase family. Glutamate--tRNA ligase type 1 subfamily. Monomer.

Its subcellular location is the cytoplasm. The enzyme catalyses tRNA(Glu) + L-glutamate + ATP = L-glutamyl-tRNA(Glu) + AMP + diphosphate. In terms of biological role, catalyzes the attachment of glutamate to tRNA(Glu) in a two-step reaction: glutamate is first activated by ATP to form Glu-AMP and then transferred to the acceptor end of tRNA(Glu). The chain is Glutamate--tRNA ligase 1 from Sphingopyxis alaskensis (strain DSM 13593 / LMG 18877 / RB2256) (Sphingomonas alaskensis).